The following is a 592-amino-acid chain: Coronatine-insensitive protein 1 (592 aa).

Positions 16 to 57 (TVDDVIEQVMTYITDPKDRDSASLVCRRWFKIDSETREHVTM) constitute an F-box domain. LRR repeat units follow at residues 58–82 (ALCY…KLKG), 83–102 (KPRA…YVTP), 103–120 (WVTE…VHFR), 121–154 (RMIV…FTTD), 155–182 (GLLS…KDGK), 183–210 (WLHE…ISPK), 211–236 (DLET…LELV), 237–264 (GFFK…EKYM), 265–283 (NLVF…MGPN), 284–308 (EMPI…LETE), 309–332 (DHCT…IGDR), 333–368 (GLEV…VSQR), 369–393 (GLIA…ITNE), 394–426 (SLES…PLDN), 427–456 (GVRS…LGLS), 457–478 (YIGQ…ESDE), 479–500 (GLME…GCCF), and 501–524 (SERA…QGYR). R85 serves as a coordination point for jasmonate. The jasmonate site is built by R348, Y386, and R409. R496 provides a ligand contact to jasmonate.

Component of SCF(COI1) E3 ubiquitin ligase complexes at least composed of ASK1 or ASK2, CUL1, RBX1A or RBX1B and COI1. Interacts with ASK1 and ASK2, but separately. Also binds to ASK11 and ASK12. Interacts with RBCS-1B and HDA6. SCF complexes interact with the COP9 signalosome (CSN). Interacts with TIFY10A.

It functions in the pathway protein modification; protein ubiquitination. Its function is as follows. Required for jasmonate-regulated plant fertility and defense processes, and for coronatine and/or other elicitors perceptions/responses. Seems to not be required for meiosis. Required for the regulation of some genes induced by wounding, but not for all. Component of SCF(COI1) E3 ubiquitin ligase complexes, which may mediate the ubiquitination and subsequent proteasomal degradation of target proteins (probably including the ribulose bisphosphate carboxylase small chain 1B RBCS-1B and the histone deacetylase HDA6). These SCF complexes play crucial roles in regulating response to jasmonate, and their interactions with the COP9 signalosome (CSN) appear to be important for their activity. Interacts with TIFY10A and inositol pentakisphosphate to form a high-affinity jasmonates coreceptor. Involved in the regulation of plant gene expression during plant-pathogen interactions with Pseudomonas syringae and Alternaria brassicicola. In Arabidopsis thaliana (Mouse-ear cress), this protein is Coronatine-insensitive protein 1 (COI1).